We begin with the raw amino-acid sequence, 295 residues long: Glycine N-methyltransferase (295 aa).

Residue Val-2 is modified to N-acetylvaline. (6S)-5-methyl-5,6,7,8-tetrahydrofolate is bound by residues Ser-4 and Tyr-6. The residue at position 10 (Ser-10) is a Phosphoserine. S-adenosyl-L-methionine is bound by residues Tyr-22, Trp-31, Tyr-34, and Arg-41. Tyr-34 bears the Phosphotyrosine mark. Position 46 is an N6-succinyllysine (Lys-46). S-adenosyl-L-methionine contacts are provided by residues Ala-65, 86–88 (DAS), 117–118 (NW), 139–142 (LGNS), and Arg-178. 3 positions are modified to N6-succinyllysine: Lys-193, Lys-198, and Lys-203. His-217 lines the (6S)-5-methyl-5,6,7,8-tetrahydrofolate pocket. An S-adenosyl-L-methionine-binding site is contributed by Tyr-223. Arg-242 contacts (6S)-5-methyl-5,6,7,8-tetrahydrofolate.

The protein belongs to the class I-like SAM-binding methyltransferase superfamily. Glycine N-methyltransferase family. In terms of assembly, homotetramer. As to expression, expressed only in liver, pancreas, and prostate.

The protein resides in the cytoplasm. It carries out the reaction glycine + S-adenosyl-L-methionine = sarcosine + S-adenosyl-L-homocysteine + H(+). Its activity is regulated as follows. Inhibited by 5-methyltetrahydrofolate monoglutamate and by 5-methyltetrahydrofolate pentaglutamate, inhibition is much more effective by the pentaglutamate form than by the monoglutamate form. Two molecules of 5-methyltetrahydrofolate are bound per tetramer. The binding sites are localized between subunits. Inhibitor binding may preclude movements of the polypeptide chain that are necessary for enzyme activity. In terms of biological role, catalyzes the methylation of glycine by using S-adenosylmethionine (AdoMet) to form N-methylglycine (sarcosine) with the concomitant production of S-adenosylhomocysteine (AdoHcy), a reaction regulated by the binding of 5-methyltetrahydrofolate. Plays an important role in the regulation of methyl group metabolism by regulating the ratio between S-adenosyl-L-methionine and S-adenosyl-L-homocysteine. The sequence is that of Glycine N-methyltransferase from Homo sapiens (Human).